The sequence spans 422 residues: Probable glycosidase CRR1 (422 aa).

An N-terminal signal peptide occupies residues 1–20 (MRISILQLVPVVGYIGFALG). The GH16 domain maps to 67–339 (DEESCAPIPA…WENSPDIIEK (273 aa)). Glu-217 (nucleophile) is an active-site residue. The active-site Proton donor is Glu-221.

This sequence belongs to the glycosyl hydrolase 16 family. CRR1 subfamily.

It is found in the spore wall. Spore specific glycosidase involved in spore wall assembly during sporulation. May be involved in copper import. This is Probable glycosidase CRR1 (CRR1) from Saccharomyces cerevisiae (strain ATCC 204508 / S288c) (Baker's yeast).